The sequence spans 576 residues: Putative SPbeta prophage-derived single-strand DNA-specific exonuclease YorK (576 aa).

Phosphotyrosine is present on tyrosine 473.

This sequence belongs to the RecJ family.

In terms of biological role, putative single-stranded-DNA-specific exonuclease. The protein is Putative SPbeta prophage-derived single-strand DNA-specific exonuclease YorK (yorK) of Bacillus subtilis (strain 168).